The primary structure comprises 966 residues: Glycine dehydrogenase (decarboxylating) (966 aa).

Position 713 is an N6-(pyridoxal phosphate)lysine (Lys-713).

This sequence belongs to the GcvP family. In terms of assembly, the glycine cleavage system is composed of four proteins: P, T, L and H. Pyridoxal 5'-phosphate serves as cofactor.

The enzyme catalyses N(6)-[(R)-lipoyl]-L-lysyl-[glycine-cleavage complex H protein] + glycine + H(+) = N(6)-[(R)-S(8)-aminomethyldihydrolipoyl]-L-lysyl-[glycine-cleavage complex H protein] + CO2. The glycine cleavage system catalyzes the degradation of glycine. The P protein binds the alpha-amino group of glycine through its pyridoxal phosphate cofactor; CO(2) is released and the remaining methylamine moiety is then transferred to the lipoamide cofactor of the H protein. This chain is Glycine dehydrogenase (decarboxylating), found in Psychromonas ingrahamii (strain DSM 17664 / CCUG 51855 / 37).